The following is a 219-amino-acid chain: GTP-binding protein Rit1 (219 aa).

Residues 28–35 (GAGGVGKS), 75–79 (DTAGQ), and 134–137 (NKSD) contribute to the GTP site.

Belongs to the small GTPase superfamily. Ras family. Interacts with AFDN, the C-terminal domain of RALGDS and RLF, but not with RIN1 and PIK3CA. RLF binds exclusively to the active GTP-bound form. Strongly interacts with BRAF, but only weakly with RAF1. BARF and RAF1 association is dependent upon the GTP-bound state. Interacts with RGL3. In terms of tissue distribution, expressed in many tissues.

It localises to the cell membrane. The catalysed reaction is GTP + H2O = GDP + phosphate + H(+). Alternates between an inactive form bound to GDP and an active form bound to GTP. Functionally, plays a crucial role in coupling NGF stimulation to the activation of both EPHB2 and MAPK14 signaling pathways and in NGF-dependent neuronal differentiation. Involved in ELK1 transactivation through the Ras-MAPK signaling cascade that mediates a wide variety of cellular functions, including cell proliferation, survival, and differentiation. The chain is GTP-binding protein Rit1 (Rit1) from Mus musculus (Mouse).